The following is a 289-amino-acid chain: Diaminopimelate epimerase (289 aa).

Substrate-binding residues include Asn-11 and Asn-78. Cys-87 (proton donor) is an active-site residue. Substrate is bound by residues 88–89 (GN), Asn-163, Asn-199, and 217–218 (ER). Residue Cys-226 is the Proton acceptor of the active site. 227–228 (GT) is a substrate binding site.

It belongs to the diaminopimelate epimerase family. Homodimer.

Its subcellular location is the cytoplasm. The enzyme catalyses (2S,6S)-2,6-diaminopimelate = meso-2,6-diaminopimelate. It functions in the pathway amino-acid biosynthesis; L-lysine biosynthesis via DAP pathway; DL-2,6-diaminopimelate from LL-2,6-diaminopimelate: step 1/1. In terms of biological role, catalyzes the stereoinversion of LL-2,6-diaminopimelate (L,L-DAP) to meso-diaminopimelate (meso-DAP), a precursor of L-lysine and an essential component of the bacterial peptidoglycan. This Mycolicibacterium gilvum (strain PYR-GCK) (Mycobacterium gilvum (strain PYR-GCK)) protein is Diaminopimelate epimerase.